The sequence spans 89 residues: Small ribosomal subunit protein uS15 (89 aa).

Belongs to the universal ribosomal protein uS15 family. Part of the 30S ribosomal subunit. Forms a bridge to the 50S subunit in the 70S ribosome, contacting the 23S rRNA.

In terms of biological role, one of the primary rRNA binding proteins, it binds directly to 16S rRNA where it helps nucleate assembly of the platform of the 30S subunit by binding and bridging several RNA helices of the 16S rRNA. Its function is as follows. Forms an intersubunit bridge (bridge B4) with the 23S rRNA of the 50S subunit in the ribosome. The protein is Small ribosomal subunit protein uS15 of Aliivibrio salmonicida (strain LFI1238) (Vibrio salmonicida (strain LFI1238)).